We begin with the raw amino-acid sequence, 149 residues long: Protein SprT-like (149 aa).

In terms of domain architecture, SprT-like spans 5 to 143 (DYVKQVSLED…CGLCRGKLLL (139 aa)). A Zn(2+)-binding site is contributed by His-64. Glu-65 is a catalytic residue. His-68 provides a ligand contact to Zn(2+).

The protein belongs to the SprT family. Zn(2+) serves as cofactor.

The protein resides in the cytoplasm. The polypeptide is Protein SprT-like (Streptococcus pneumoniae (strain Hungary19A-6)).